The sequence spans 219 residues: Leukocyte surface antigen CD53 (219 aa).

At 1–11 (MGMSSLKLLKY) the chain is on the cytoplasmic side. The chain crosses the membrane as a helical span at residues 12-32 (VLFIFNLLFWVCGCCILGFGI). Residues 33–54 (YFLVQNTYGVLFRNLPFLTLGN) lie on the Extracellular side of the membrane. The helical transmembrane segment at 55-69 (ILVIVGSIIMVVAFL) threads the bilayer. Over 70–80 (GCMGSIKENKC) the chain is Cytoplasmic. The chain crosses the membrane as a helical span at residues 81–106 (LLMSFFVLLLIILLAEVTIAILLFVY). Topologically, residues 107-181 (EQKLNTLVAE…NKAKSWFHSN (75 aa)) are extracellular. N-linked (GlcNAc...) asparagine glycans are attached at residues asparagine 119, asparagine 129, and asparagine 148. A helical transmembrane segment spans residues 182 to 206 (FLYIGIITICVCVIQVLGMSFALTL). Residues 207 to 219 (NCQIDKTSQALGL) lie on the Cytoplasmic side of the membrane.

It belongs to the tetraspanin (TM4SF) family. As to quaternary structure, interacts with SCIMP. Interacts with CD45/PTPRC. Interacts with IL7R. Interacts with RBL2 and PPP2CA.

It is found in the cell membrane. Its subcellular location is the cell junction. The protein resides in the membrane. Functionally, structural component of specialized membrane microdomains known as tetraspanin-enriched microdomains (TERMs), which act as platforms for receptor clustering and signaling. Participates thereby in diverse biological functions such as cell signal transduction, adhesion, migration and protein trafficking. Plays a role in the activation of monocytes and B-cells. Acts as an essential regulator of B-cell development by promoting interleukin-7 receptor/IL7R signaling. Also promotes, in B-cells, the BCR signaling by recruiting PKC to the plasma membrane in order to phosphorylate its substrates. Plays an essential role in lymphocyte homing to lymph nodes by stabilizing L-selectin/SELL cell surface expression. Also mediates metabolic and inflammatory functions in hepatocytes and adipose tissue by promoting TNF-alpha and LPS signaling independent of the immune compartment. Protects hematopoietic stem cell function in response to stress by facilitating DREAM complex activity through association with p130/RBL2 and its phosphatase PP2A. The chain is Leukocyte surface antigen CD53 (Cd53) from Mus musculus (Mouse).